We begin with the raw amino-acid sequence, 311 residues long: Serine/threonine-protein phosphatase 4 catalytic subunit A (311 aa).

4 residues coordinate Mn(2+): Asp58, His60, Asp86, and Asn118. His119 acts as the Proton donor in catalysis. Mn(2+)-binding residues include His168 and His242. Leu311 is modified (leucine methyl ester).

It belongs to the PPP phosphatase family. PP-4 (PP-X) subfamily. As to quaternary structure, serine/threonine-protein phosphatase 4 (PP4) occurs in different assemblies of the catalytic and one or more regulatory subunits. The cofactor is Mn(2+).

Its subcellular location is the cytoplasm. The protein resides in the cytoskeleton. It localises to the microtubule organizing center. It is found in the centrosome. It carries out the reaction O-phospho-L-seryl-[protein] + H2O = L-seryl-[protein] + phosphate. The enzyme catalyses O-phospho-L-threonyl-[protein] + H2O = L-threonyl-[protein] + phosphate. Protein phosphatase that regulates many processes such as microtubule organization at centrosomes. This Danio rerio (Zebrafish) protein is Serine/threonine-protein phosphatase 4 catalytic subunit A (ppp4ca).